The following is a 420-amino-acid chain: MNIFNNNLHETDKEINEIIKHEKLRQSNVIELIASENFVSPAVLEAQGALLTNKYAEGYPSKRFYNGCEEVDKAENLAIERVKKLFNCKYANVQPHSGSQANQAVYLALLQPGDTVLGMSLDSGGHLTHGAAPNMSGKWFNAVSYSVNKETYLIDYDEIERLADLHKPKLLIAGFSAYPRNIDFAKFREIVDKVGAYFMADIAHIAGLVATGEHQSPIPYAHAVTSTTHKTLRGPRGGLILSKDEEIGHKINSALFPGLQGGPLMHIIAAKAVAFLENLQPEYKSYIQQVISNAKALASSLQERGYDILTGGTDNHIVLVDLRKDGITGKLAANSLDRAGITCNKNAIPFDETSPFITSGIRLGTPACTTRGFKEKDFVLVGHMVADILDGLKNNEDNSALEQKVLNEVTKLIELFPFYG.

Residues Leu121 and 125–127 (GHL) contribute to the (6S)-5,6,7,8-tetrahydrofolate site. Lys230 is subject to N6-(pyridoxal phosphate)lysine. (6S)-5,6,7,8-tetrahydrofolate-binding positions include Glu246 and 354–356 (SPF).

It belongs to the SHMT family. Homodimer. Pyridoxal 5'-phosphate serves as cofactor.

It localises to the cytoplasm. The catalysed reaction is (6R)-5,10-methylene-5,6,7,8-tetrahydrofolate + glycine + H2O = (6S)-5,6,7,8-tetrahydrofolate + L-serine. Its pathway is one-carbon metabolism; tetrahydrofolate interconversion. It functions in the pathway amino-acid biosynthesis; glycine biosynthesis; glycine from L-serine: step 1/1. Functionally, catalyzes the reversible interconversion of serine and glycine with tetrahydrofolate (THF) serving as the one-carbon carrier. This reaction serves as the major source of one-carbon groups required for the biosynthesis of purines, thymidylate, methionine, and other important biomolecules. Also exhibits THF-independent aldolase activity toward beta-hydroxyamino acids, producing glycine and aldehydes, via a retro-aldol mechanism. This is Serine hydroxymethyltransferase from Rickettsia peacockii (strain Rustic).